The primary structure comprises 1295 residues: MMEILRGSPALSAFRINKLLARFQAANLQVHNIYAEYVHFADLNAPLNDSEQAQLTRLLQYGPALSSHTLAGKLLLVTPRPGTISPWSSKATDIAHNCGLQQIDRLERGVAYYIEASTLTAEQWRQVAAELHDRMMETVFSSLTDAEKLFIHHQPAPVSSVDLLGEGRQALIDANLRLGLALAEDEIDYLQEAFTKLGRNPNDIELYMFAQANSEHCRHKIFNADWIIDGKPQPKSLFKMIKNTFETTPDYVLSAYKDNAAVMEGSAVGRYFADHNTGRYDFHQEPAHILMKVETHNHPTAISPWPGAATGSGGEIRDEGATGRGAKPKAGLVGFSVSNLRIPGFEQPWEEDFGKPERIVTALDIMTEGPLGGAAFNNEFGRPALTGYFRTYEEKVNSHNGEELRGYHKPIMLAGGIGNIRADHVQKGEIVVGAKLIVLGGPAMNIGLGGGAASSMASGQSDADLDFASVQRDNPEMERRCQEVIDRCWQLGDANPILFIHDVGAGGLSNAMPELVSDGGRGGKFELRDILSDEPGMSPLEIWCNESQERYVLAVAADQLPLFDELCKRERAPYAVIGDATEEQHLSLHDNHFDNQPIDLPLDVLLGKTPKMTRDVQTLKAKGDALNRADITIADAVNRVLHLPTVAEKTFLVTIGDRTVTGMVARDQMVGPWQVPVADCAVTTASLDSYYGEAMSIGERAPVALLDFAASARLAVGEALTNIAATQIGDIKRIKLSANWMAAAGHPGEDAGLYDAVKAVGEELCPQLGLTIPVGKDSMSMKTRWQEGNEQREMTSPLSLVISAFARVEDVRHTLTPQLSTEDNALLLIDLGKGHNALGATALAQVYRQLGDKPADVRDVAQLKGFYDAMQVLVAARKLLAWHDRSDGGLLVTLAEMAFAGHCGVQVDIAALGDDHLAALFNEELGGVIQVRAEDRDAVETLLAQYGLADCVHYLGQALAGDRFVITANDRTVFSESRTTLRVWWAETTWQMQRLRDNPQCADQEHEAKANDADPGLNVKLSFDINEDIAAPYIATGARPKVAVLREQGVNSHVEMAAAFHRAGFDAIDVHMSDLLGGRIGLGNFHALVACGGFSYGDVLGAGEGWAKSILFNHRVRDEFETFFHRPQTLALGVCNGCQMMSNLRELIPGSELWPRFVRNHSDRFEARFSLVEVTQSPSLLLQGMVGSQMPIAVSHGEGRVEVRDDAHLAALESKGLVALRYVDNFGKVTETYPANPNGSPNGITAVTTENGRVTIMMPHPERVFRTVANSWHPENWGEDSPWMRIFRNARKQLG.

The disordered stretch occupies residues 305-327 (WPGAATGSGGEIRDEGATGRGAK). ATP-binding positions include 307 to 318 (GAATGSGGEIRD), 386 to 388 (TGY), and A678. Residues D679, E718, N722, and D884 each coordinate Mg(2+). ATP is bound at residue S886. Residues 1042–1295 (VAVLREQGVN…IFRNARKQLG (254 aa)) enclose the Glutamine amidotransferase type-1 domain. Residue C1135 is the Nucleophile of the active site. Residues H1260 and E1262 contribute to the active site.

In the N-terminal section; belongs to the FGAMS family. In terms of assembly, monomer.

It is found in the cytoplasm. It catalyses the reaction N(2)-formyl-N(1)-(5-phospho-beta-D-ribosyl)glycinamide + L-glutamine + ATP + H2O = 2-formamido-N(1)-(5-O-phospho-beta-D-ribosyl)acetamidine + L-glutamate + ADP + phosphate + H(+). It participates in purine metabolism; IMP biosynthesis via de novo pathway; 5-amino-1-(5-phospho-D-ribosyl)imidazole from N(2)-formyl-N(1)-(5-phospho-D-ribosyl)glycinamide: step 1/2. Functionally, phosphoribosylformylglycinamidine synthase involved in the purines biosynthetic pathway. Catalyzes the ATP-dependent conversion of formylglycinamide ribonucleotide (FGAR) and glutamine to yield formylglycinamidine ribonucleotide (FGAM) and glutamate. In Salmonella typhi, this protein is Phosphoribosylformylglycinamidine synthase.